The following is a 435-amino-acid chain: Hexane cyclase xenF (435 aa).

The signal sequence occupies residues methionine 1–alanine 23. N-linked (GlcNAc...) asparagine glycosylation is found at asparagine 81 and asparagine 156.

The protein belongs to the Diels-Alderase family.

Its pathway is mycotoxin biosynthesis. Hexane cyclase; part of the gene cluster that mediates the biosynthesis of xenoacremones such as xenoacremone A, a compound that shows inhibitory activity toward the PI3K/AKT signaling pathway and which has the ability to induce apoptosis of A549 lung cancer cells. Within the pathway, cooperation of the hybrid PKS-NRPS xenE and the trans-acting enoyl reductase xenG is responsible for the formation of the reduced tyrosine-nonaketide derivative. The alpha/beta hydrolase xenA then accelerates intramolecular nucleophilic attack to give a pyrrolidone derivative. Subsequently, three enzymes, xenF, xenD, and xenC, coordinately participate in the conversion to xenoacremone B. XenF catalyzes sigmatropic rearrangement to form an A-ring, which leads to an unusual intermediate with a hexane ring, which is required for the formation of the tricarbocyclic product. Epoxidation catalyzed by xenD and the formation of the paracyclophane ether catalyzed by xenC initiate a spontaneous intramolecular Diels-Alder (IMDA) reaction to yield xenoacremone B. Spontaneous hydration of xenoacremone B leads to the formation of xenoacremone A, which undergoes subsequent methylation to afford xenoacremone C. This Xenoacremonium sinensis (Endophyte fungus) protein is Hexane cyclase xenF.